We begin with the raw amino-acid sequence, 1634 residues long: MSSTQGNGEHWKSLESVGISRKELAMAEALQMEYDALSRLRHDKEENRAKQNADPSLISWDEPGVDFYSKPAGRRTDLKLLRGLSGSDPTLNYNSLSPQEGPPNHSTSQGPQPGSDPWPKGSLSGDYLYIFDGSDGGVSSSPGPGDIEGSCKKLSPPPLPPRASIWDTPPLPPRKGSPSSSKISQPSDINTFSLVEQLPGKLLEHRILEEEEVLGGGGQGRLLGSVDYDGINDAITRLNLKSTYDAEMLRDATRGWKEGRGPLDFSKDTSGKPVARSKTMPPQVPPRTYASRYGNRKNATPGKNRRISAAPVGSRPHTVANGHELFEVSEERDEEVAAFCHMLDILRSGSDIQDYFLTGYVWSAVTPSPEHLGDEVNLKVTVLCDRLQEALTFTCNCSSTVDLLIYQTLCYTHDDLRNVDVGDFVLKPCGLEEFLQNKHALGSHEYIQYCRKFDIDIRLQLMEQKVVRSDLARTVNDDQSPSTLNYLVHLQERPVKQTISRQALSLLFDTYHNEVDAFLLADGDFPLKADRVVQSVKAICNALAAVETPEITSALNQLPPCPSRMQPKIQKDPSVLAVRENREKVVEALTAAILDLVELYCNTFNADFQTAVPGSRKHDLVQEACHFARSLAFTVYATHRIPIIWATSYEDFYLSCSLSHGGKELCSPLQTRRAHFSKYLFHLIVWDQQICFPVQVNRLPRETLLCATLYALPIPPPGSSSEANKQRRVPEALGWVTTPLFNFRQVLTCGRKLLGLWPATQENPSARWSAPNFHQPDSVILQIDFPTSAFDIKFTSPPGDKFSPRYEFGSLREEDQRKLKDIMQKESLYWLTDADKKRLWEKRYYCHSEVSSLPLVLASAPSWEWACLPDIYVLLKQWTHMNHQDALGLLHATFPDQEVRRMAVQWIGSLSDAELLDYLPQLVQALKYECYLDSPLVRFLLKRAVSDLRVTHYFFWLLKDGLKDSQFSIRYQYLLAALLCCCGKGLREEFNRQCWLVNALAKLAQQVREAAPSARQGILRTGLEEVKQFFALNGSCRLPLSPSLLVKGIVPRDCSYFNSNAVPLKLSFQNVDPLGENIRVIFKCGDDLRQDMLTLQMIRIMSKIWVQEGLDMRMVIFRCFSTGRGRGMVEMIPNAETLRKIQVEHGVTGSFKDRPLADWLQKHNPGEDEYEKAVENFIYSCAGCCVATYVLGICDRHNDNIMLKTTGHMFHIDFGRFLGHAQMFGNIKRDRAPFVFTSDMAYVINGGDKPSSRFHDFVDLCCQAYNLIRKHTHLFLNLLGLMLSCGIPELSDLEDLKYVYDALRPQDTEANATTYFTRLIESSLGSVATKLNFFIHNLAQMKFTGSDDRLTLSFASRTHTLKSSGRISDVFLCRHEKIFHPNKGYIYVVKVMRENTHEATYIQRTFEEFQELHNKLRLLFPSSHLPSFPSRFVIGRSRGEAVAERRREELNGYIWHLIHAPPEVAECDLVYTFFHPLPRDEKAMGTSPAPKSSDGTWARPVGKVGGEVKLSISYKNNKLFIMVMHIRGLQLLQDGNDPDPYVKIYLLPDPQKTTKRKTKVARKTCNPTYNEMLVYDGIPKGDLQQRELQLSVLSEQGFWENVLLGEVNIRLRELDLAQEKTGWFALGSRSHGTL.

The tract at residues 2 to 298 (SSTQGNGEHW…YASRYGNRKN (297 aa)) is interaction with GRB2. 2 disordered regions span residues 45-188 (EENR…QPSD) and 259-315 (GRGP…VGSR). Residues 87–112 (SDPTLNYNSLSPQEGPPNHSTSQGPQ) are compositionally biased toward polar residues. The segment covering 176–187 (GSPSSSKISQPS) has biased composition (low complexity). A compositionally biased stretch (basic and acidic residues) spans 259–270 (GRGPLDFSKDTS). The PI3K-RBD domain maps to 375-463 (EVNLKVTVLC…DIDIRLQLME (89 aa)). One can recognise a C2 PI3K-type domain in the interval 635 to 786 (VYATHRIPII…DSVILQIDFP (152 aa)). The 177-residue stretch at 805-981 (RYEFGSLREE…QYLLAALLCC (177 aa)) folds into the PIK helical domain. The PI3K/PI4K catalytic domain maps to 1050-1328 (VPRDCSYFNS…LIESSLGSVA (279 aa)). The interval 1056–1062 (YFNSNAV) is G-loop. The segment at 1192-1200 (GICDRHNDN) is catalytic loop. Positions 1211–1237 (HIDFGRFLGHAQMFGNIKRDRAPFVFT) are activation loop. The region spanning 1365 to 1481 (GRISDVFLCR…TFFHPLPRDE (117 aa)) is the PX domain. Positions 1504 to 1624 (VGGEVKLSIS…DLAQEKTGWF (121 aa)) constitute a C2 domain.

This sequence belongs to the PI3/PI4-kinase family. Part of a complex with ERBB2 and EGFR. Part of a complex with phosphorylated EGFR and GRB2. Interacts with phosphorylated EGFR and PDGFR, maybe indirectly. Interacts with GRB2. Ca(2+) is required as a cofactor. It depends on Mg(2+) as a cofactor. The cofactor is Mn(2+). Expressed in columnar and transitional epithelia, mononuclear cells, and ganglion cells (at protein level). Widely expressed, with highest levels in thymus and placenta and lowest in peripheral blood, skeletal muscle and kidney.

Its subcellular location is the microsome. It is found in the cell membrane. It localises to the cytoplasm. The protein resides in the cytosol. The protein localises to the nucleus. Its subcellular location is the endoplasmic reticulum. It catalyses the reaction a 1,2-diacyl-sn-glycero-3-phospho-(1D-myo-inositol 4-phosphate) + ATP = a 1,2-diacyl-sn-glycero-3-phospho-(1D-myo-inositol-3,4-bisphosphate) + ADP + H(+). The enzyme catalyses a 1,2-diacyl-sn-glycero-3-phospho-(1D-myo-inositol) + ATP = a 1,2-diacyl-sn-glycero-3-phospho-(1D-myo-inositol-3-phosphate) + ADP + H(+). Its activity is regulated as follows. Activated by GRB2. Phosphorylates PtdIns and PtdIns4P with a preference for PtdIns. Does not phosphorylate PtdIns(4,5)P2. May be involved in EGF and PDGF signaling cascades. In Homo sapiens (Human), this protein is Phosphatidylinositol 4-phosphate 3-kinase C2 domain-containing subunit beta (PIK3C2B).